We begin with the raw amino-acid sequence, 249 residues long: DNA polymerase sliding clamp (249 aa).

Belongs to the PCNA family. In terms of assembly, homotrimer. The subunits circularize to form a toroid; DNA passes through its center. Replication factor C (RFC) is required to load the toroid on the DNA.

Sliding clamp subunit that acts as a moving platform for DNA processing. Responsible for tethering the catalytic subunit of DNA polymerase and other proteins to DNA during high-speed replication. This is DNA polymerase sliding clamp from Thermococcus fumicolans.